The chain runs to 502 residues: MQIKAEEISKIIEEQIQSYEQRVEMSETGTVLYVGDGIARVHGVQNAMAMELLEFPGGLMGMVLNLEEDNVGVALLGDDTQIKEGDPVKRTGKIFSVPVGDAVMGRVLNPLGQPIDGLGPLDAKEFRPVELKAPGIIARKSVHEPMPTGIKAIDAMTPIGRGQRELVIGDRQTGKTAVCIDAILAQKNTDIHCFYVAIGQKKATVALVADTLRKYGAMEYTTIISATASEPAPLQFISAYSGCTMAEFYRNNGKHALIIYDDLSKQAVAYRQMSLLLRRPPGREAYPGDVFYLHSRLLERAAKVNDSLGAGSLTALPIIETQAGDVSAYIPTNVISITDGQVYLEPNLFNAGIRPAINVGLSVSRVGGAAQIKAMKQVAGTMRLDLAQYRELAAFAQFGSDLDKATKAKLDRGARLVELLKQPQYEPMPTEEQVASMYAATRGLMDDVAVADIRKFETAMLDYLRSGKADILNDIKTKKALDQDIENRLKAAIAEFKKGYQA.

G169–T176 is an ATP binding site.

This sequence belongs to the ATPase alpha/beta chains family. In terms of assembly, F-type ATPases have 2 components, CF(1) - the catalytic core - and CF(0) - the membrane proton channel. CF(1) has five subunits: alpha(3), beta(3), gamma(1), delta(1), epsilon(1). CF(0) has three main subunits: a(1), b(2) and c(9-12). The alpha and beta chains form an alternating ring which encloses part of the gamma chain. CF(1) is attached to CF(0) by a central stalk formed by the gamma and epsilon chains, while a peripheral stalk is formed by the delta and b chains.

It is found in the cell inner membrane. It carries out the reaction ATP + H2O + 4 H(+)(in) = ADP + phosphate + 5 H(+)(out). Its function is as follows. Produces ATP from ADP in the presence of a proton gradient across the membrane. The alpha chain is a regulatory subunit. In Nitratidesulfovibrio vulgaris (strain ATCC 29579 / DSM 644 / CCUG 34227 / NCIMB 8303 / VKM B-1760 / Hildenborough) (Desulfovibrio vulgaris), this protein is ATP synthase subunit alpha.